Consider the following 274-residue polypeptide: Large ribosomal subunit protein uL2 (274 aa).

The tract at residues 223–274 (VAMNPVDHPMGGGEGKASGGHPRSRTGLYAKGKKTRNTNKYSKNYILSRKKR) is disordered.

The protein belongs to the universal ribosomal protein uL2 family. As to quaternary structure, part of the 50S ribosomal subunit. Forms a bridge to the 30S subunit in the 70S ribosome.

One of the primary rRNA binding proteins. Required for association of the 30S and 50S subunits to form the 70S ribosome, for tRNA binding and peptide bond formation. It has been suggested to have peptidyltransferase activity; this is somewhat controversial. Makes several contacts with the 16S rRNA in the 70S ribosome. The protein is Large ribosomal subunit protein uL2 of Amoebophilus asiaticus (strain 5a2).